A 99-amino-acid chain; its full sequence is Large ribosomal subunit protein uL23c (99 aa).

It belongs to the universal ribosomal protein uL23 family. Part of the 50S ribosomal subunit.

The protein localises to the plastid. It is found in the chloroplast. In terms of biological role, binds to 23S rRNA. The sequence is that of Large ribosomal subunit protein uL23c (rpl23) from Emiliania huxleyi (Coccolithophore).